Reading from the N-terminus, the 259-residue chain is 7alpha-hydroxysteroid dehydrogenase (259 aa).

Residues Ile-18, 37-38, and Asn-90 each bind NAD(+); that span reads DY. The glycochenodeoxycholate site is built by Ser-145 and Tyr-158. NAD(+)-binding positions include Tyr-158, Lys-162, and 191–193; that span reads ILT. The active-site Proton acceptor is the Tyr-158.

This sequence belongs to the short-chain dehydrogenases/reductases (SDR) family. Homotetramer.

It catalyses the reaction cholate + NAD(+) = 3alpha,12alpha-dihydroxy-7-oxo-5beta-cholanate + NADH + H(+). It carries out the reaction chenodeoxycholate + NAD(+) = 7-oxolithocholate + NADH + H(+). The enzyme catalyses taurochenodeoxycholate + NAD(+) = 7-oxotaurolithocholate + NADH + H(+). The catalysed reaction is glycochenodeoxycholate + NAD(+) = 7-oxoglycolithocholate + NADH + H(+). It catalyses the reaction taurocholate + NAD(+) = 7-oxo-taurodeoxycholate + NADH + H(+). It carries out the reaction glycocholate + NAD(+) = 7-oxo-glycodeoxycholate + NADH + H(+). The enzyme catalyses an aromatic primary alcohol + NAD(+) = an aromatic aldehyde + NADH + H(+). The catalysed reaction is benzyl alcohol + NAD(+) = benzaldehyde + NADH + H(+). It catalyses the reaction 4-cyanobenzyl alcohol + NAD(+) = 4-cyanobenzaldehyde + NADH + H(+). It carries out the reaction 4-acetoxybenzyl alcohol + NAD(+) = 4-acetoxybenzaldehyde + NADH + H(+). The enzyme catalyses 4-(trifluoromethyl)benzyl alcohol + NAD(+) = 4-(trifluoromethyl)benzaldehyde + NADH + H(+). Functionally, 7alpha-hydroxysteroid dehydrogenase involved in the metabolism of bile acids in the gut. Catalyzes the NAD(+)-dependent oxidation of the 7alpha-hydroxy group of 7alpha-hydroxysteroids, such as cholate, chenodeoxycholate, taurochenodeoxycholate, glycochenodeoxycholate, taurocholate and glycocholate, to the corresponding 7-oxosteroids. Since it is also able to catalyze the reduction of nonsteroidal carbonyl compounds such as various benzaldehyde analogs to their corresponding benzyl alcohols, this enzyme may also function in the detoxification of xenobiotics containing carbonyl groups in the large intestine. This Bacteroides fragilis (strain ATCC 25285 / DSM 2151 / CCUG 4856 / JCM 11019 / LMG 10263 / NCTC 9343 / Onslow / VPI 2553 / EN-2) protein is 7alpha-hydroxysteroid dehydrogenase.